A 309-amino-acid polypeptide reads, in one-letter code: MILTVTLNPAIDVSYPLDELKCDTVNRVVDVTKTPGGKGLNVSRVLNDFGETVKATGCVGGESGDFIINHLPDSILSRFYKISGDTRTCIAILHEGNQTEILEKGPLLSVDEIDGFTHQFKYLLNDVDVVTMSGSLPAGMPDDYYQKLIKIANLNGKKTVLDCSGNALEAVLKGDSKPTVIKPNLEELSQLLGKEMTKDFEALKEVLQDELFEGIEWIIVSLGADGVFAKHKDTFYNVDIPKIKIVSAVGSGDSTVAGIASGLANDEDDRALLTKANVLGMLNAQEKTTGHVNMANYDKLYQSIKVKEV.

This sequence belongs to the carbohydrate kinase PfkB family. LacC subfamily.

It catalyses the reaction D-tagatofuranose 6-phosphate + ATP = D-tagatofuranose 1,6-bisphosphate + ADP + H(+). It functions in the pathway carbohydrate metabolism; D-tagatose 6-phosphate degradation; D-glyceraldehyde 3-phosphate and glycerone phosphate from D-tagatose 6-phosphate: step 1/2. This chain is Tagatose-6-phosphate kinase, found in Streptococcus pyogenes serotype M12 (strain MGAS2096).